The primary structure comprises 340 residues: DNA-directed RNA polymerase subunit alpha (340 aa).

The tract at residues 1 to 236 is alpha N-terminal domain (alpha-NTD); it reads MLSLSKNWNT…EQLQLFISFE (236 aa). The tract at residues 251–340 is alpha C-terminal domain (alpha-CTD); the sequence is FSPYLLKRVD…LSKRYEDSYN (90 aa).

The protein belongs to the RNA polymerase alpha chain family. In terms of assembly, homodimer. The RNAP catalytic core consists of 2 alpha, 1 beta, 1 beta' and 1 omega subunit. When a sigma factor is associated with the core the holoenzyme is formed, which can initiate transcription.

It catalyses the reaction RNA(n) + a ribonucleoside 5'-triphosphate = RNA(n+1) + diphosphate. Its function is as follows. DNA-dependent RNA polymerase catalyzes the transcription of DNA into RNA using the four ribonucleoside triphosphates as substrates. This chain is DNA-directed RNA polymerase subunit alpha, found in Rickettsia conorii (strain ATCC VR-613 / Malish 7).